The following is a 118-amino-acid chain: Down syndrome critical region protein 4 (118 aa).

Positions methionine 1–serine 39 are disordered. The segment covering serine 28–serine 39 has biased composition (low complexity).

As to expression, mainly expressed in placenta.

This chain is Down syndrome critical region protein 4 (DSCR4), found in Homo sapiens (Human).